Reading from the N-terminus, the 246-residue chain is MLDLYIEEIYKRIEKIKSTQLEKIKQAAHLITESLISEDSVFHVFGCGHSHMAAEELFYRAGGLACVNAILPSELMLHEGALKSSYYERNEEIIKLIFDRYELRKGECIIIVSHSGRNGAPVEAAIDAKRRGLHVVALTSTEYKQKTFSRHSSGKFLEDVADIVIDNCGPYGDAVLTVEKEDIKISFSPLSTVLNTVILNMLEAEIITNMLEKNMSPPVFLSGNIEGAEEHNLKLIEKYKKRLRHL.

Residues 31–212 (ITESLISEDS…EAEIITNMLE (182 aa)) form the SIS domain.

It belongs to the UPF0309 family.

This Caldanaerobacter subterraneus subsp. tengcongensis (strain DSM 15242 / JCM 11007 / NBRC 100824 / MB4) (Thermoanaerobacter tengcongensis) protein is UPF0309 protein TTE0306.